The primary structure comprises 65 residues: Large ribosomal subunit protein bL35 (65 aa).

The disordered stretch occupies residues 1 to 25 (MPKMKSHRGAAKRFKKTGTGKLKRA).

It belongs to the bacterial ribosomal protein bL35 family.

The sequence is that of Large ribosomal subunit protein bL35 from Clostridium botulinum (strain Eklund 17B / Type B).